A 720-amino-acid polypeptide reads, in one-letter code: Ciliated left-right organizer metallopeptidase (720 aa).

Positions 1-25 (MTVSFSMFQIYRLVWLSFMTSMCLS) are cleaved as a signal peptide. Residues 26–668 (ACIHDSVLQE…ALYVSHMLYS (643 aa)) are Extracellular-facing. H243 provides a ligand contact to Zn(2+). The active site involves E244. 2 residues coordinate Zn(2+): H247 and H322. A helical transmembrane segment spans residues 669-689 (YVIGGGCCAVCGAAIIFALFW). Residues 690 to 720 (YKLRRQFLRVGSSYPPETSNHERPQIPADLV) are Cytoplasmic-facing.

The protein belongs to the peptidase M8 family. Zn(2+) is required as a cofactor.

It localises to the membrane. Functionally, putative metalloprotease playing a role in the process of LR patterning. This Xenopus laevis (African clawed frog) protein is Ciliated left-right organizer metallopeptidase (cirop).